Here is a 252-residue protein sequence, read N- to C-terminus: Cell division protein ZapD (252 aa).

This sequence belongs to the ZapD family. Interacts with FtsZ.

It is found in the cytoplasm. Its function is as follows. Cell division factor that enhances FtsZ-ring assembly. Directly interacts with FtsZ and promotes bundling of FtsZ protofilaments, with a reduction in FtsZ GTPase activity. The protein is Cell division protein ZapD of Chromobacterium violaceum (strain ATCC 12472 / DSM 30191 / JCM 1249 / CCUG 213 / NBRC 12614 / NCIMB 9131 / NCTC 9757 / MK).